Here is a 344-residue protein sequence, read N- to C-terminus: tRNA N6-adenosine threonylcarbamoyltransferase (344 aa).

Fe cation-binding residues include H112 and H116. Substrate-binding positions include 134-138, D167, G180, and N280; that span reads LASGG. D308 provides a ligand contact to Fe cation.

This sequence belongs to the KAE1 / TsaD family. The cofactor is Fe(2+).

Its subcellular location is the cytoplasm. The enzyme catalyses L-threonylcarbamoyladenylate + adenosine(37) in tRNA = N(6)-L-threonylcarbamoyladenosine(37) in tRNA + AMP + H(+). Functionally, required for the formation of a threonylcarbamoyl group on adenosine at position 37 (t(6)A37) in tRNAs that read codons beginning with adenine. Is involved in the transfer of the threonylcarbamoyl moiety of threonylcarbamoyl-AMP (TC-AMP) to the N6 group of A37, together with TsaE and TsaB. TsaD likely plays a direct catalytic role in this reaction. This chain is tRNA N6-adenosine threonylcarbamoyltransferase, found in Rickettsia rickettsii (strain Iowa).